Consider the following 385-residue polypeptide: UDP-N-acetylglucosamine--N-acetylmuramyl-(pentapeptide) pyrophosphoryl-undecaprenol N-acetylglucosamine transferase (385 aa).

Residues Thr-11–Gly-13, Asn-117, Arg-160, Ser-215, and Gln-317 contribute to the UDP-N-acetyl-alpha-D-glucosamine site.

This sequence belongs to the glycosyltransferase 28 family. MurG subfamily.

The protein localises to the cell inner membrane. The catalysed reaction is di-trans,octa-cis-undecaprenyl diphospho-N-acetyl-alpha-D-muramoyl-L-alanyl-D-glutamyl-meso-2,6-diaminopimeloyl-D-alanyl-D-alanine + UDP-N-acetyl-alpha-D-glucosamine = di-trans,octa-cis-undecaprenyl diphospho-[N-acetyl-alpha-D-glucosaminyl-(1-&gt;4)]-N-acetyl-alpha-D-muramoyl-L-alanyl-D-glutamyl-meso-2,6-diaminopimeloyl-D-alanyl-D-alanine + UDP + H(+). The protein operates within cell wall biogenesis; peptidoglycan biosynthesis. Cell wall formation. Catalyzes the transfer of a GlcNAc subunit on undecaprenyl-pyrophosphoryl-MurNAc-pentapeptide (lipid intermediate I) to form undecaprenyl-pyrophosphoryl-MurNAc-(pentapeptide)GlcNAc (lipid intermediate II). The chain is UDP-N-acetylglucosamine--N-acetylmuramyl-(pentapeptide) pyrophosphoryl-undecaprenol N-acetylglucosamine transferase from Rickettsia prowazekii (strain Madrid E).